The primary structure comprises 301 residues: NAD kinase (301 aa).

D73 acts as the Proton acceptor in catalysis. Residues 73–74, 160–161, R188, D190, A198, 201–206, A225, and Q257 contribute to the NAD(+) site; these read DG, NE, and TAYNIS.

The protein belongs to the NAD kinase family. A divalent metal cation is required as a cofactor.

It localises to the cytoplasm. The enzyme catalyses NAD(+) + ATP = ADP + NADP(+) + H(+). Involved in the regulation of the intracellular balance of NAD and NADP, and is a key enzyme in the biosynthesis of NADP. Catalyzes specifically the phosphorylation on 2'-hydroxyl of the adenosine moiety of NAD to yield NADP. In Helicobacter hepaticus (strain ATCC 51449 / 3B1), this protein is NAD kinase.